A 309-amino-acid polypeptide reads, in one-letter code: Agglutinin (309 aa).

Met-1 is subject to N-acetylmethionine. Jacalin-type lectin domains are found at residues 4–148 (FLTV…YVKI) and 163–308 (PRGP…HMEY).

It belongs to the jacalin lectin family.

Functionally, D-mannose/D-glucose-binding lectin. Binds N-linked high-mannose-type glycans. Has a preference for smaller (Man(2)-Man(6)) high-mannose-type glycans to larger (Man(7)-Man(9)) ones. Recognizes both alpha1-6 extended and alpha1-3 extended monoantennary glycans. The addition of alpha1-2Man to the Man-alpha1-3Man-beta branch results in a significant loss of affinity, but beta1-2GlcNAc has some affinity. Has less affinity for biantennary glycans, and affinity is very weak for the biantennary complex-type N-glycans with bisecting GlcNAc. No affinity is observed for tri- and tetra-antennary glycans. Has mitogenic and hemagglutinating activities. This chain is Agglutinin, found in Castanea crenata (Japanese chestnut).